Consider the following 732-residue polypeptide: E3 ubiquitin-protein ligase DCST1 (732 aa).

Topologically, residues 1-46 (MAFLSSTLHSLGIFEKISRIKEVLKNRLLDLTKRRDQAREQQRKRP) are cytoplasmic. The chain crosses the membrane as a helical span at residues 47-67 (HTIIQGLLLWSLPVSWIRFLW). Residues 68–76 (RQPGEFPVT) are Extracellular-facing. A helical membrane pass occupies residues 77–97 (AFLLGAGTGGLLAIGLFQLLV). At 98–107 (NPMNIYEEQK) the chain is on the cytoplasmic side. Residues 108–128 (VVALYCLASLGAIGWGTSPHI) form a helical membrane-spanning segment. Residues 129 to 394 (RCASLLLVPK…VRDYVRQQET (266 aa)) lie on the Extracellular side of the membrane. N-linked (GlcNAc...) asparagine glycosylation is found at Asn-184, Asn-217, Asn-346, and Asn-374. The chain crosses the membrane as a helical span at residues 395-415 (YLQWAMGLLHVLLSCTFLLVF). Residues 416-489 (HSAFSYMDHY…RYVIRELLET (74 aa)) are Cytoplasmic-facing. The chain crosses the membrane as a helical span at residues 490–510 (LPIVLLLLVLCAIDWALYSVF). The Extracellular portion of the chain corresponds to 511–576 (DTIRQHSFVQ…PQPISLNARD (66 aa)). Residue Asn-551 is glycosylated (N-linked (GlcNAc...) asparagine). The helical transmembrane segment at 577–597 (YFKASLPTLLLVCLCLAQAFG) threads the bilayer. The Cytoplasmic segment spans residues 598 to 732 (YRLRRVIAAF…DSNDDAVYGD (135 aa)). The RING-type; degenerate zinc-finger motif lies at 672 to 711 (CVVCQAMETPDSYVCPTPDCKALYCRSCWDDMQRLCPVCT).

In terms of assembly, interacts with STAT2; the interaction results in STAT2 'Lys-48'-linked ubiquitination leading to its proteasomal degradation. Interacts with DCST2. In terms of tissue distribution, expressed in testis.

Its subcellular location is the cell membrane. It localises to the cytoplasmic vesicle. It is found in the secretory vesicle. The protein localises to the acrosome membrane. It catalyses the reaction S-ubiquitinyl-[E2 ubiquitin-conjugating enzyme]-L-cysteine + [acceptor protein]-L-lysine = [E2 ubiquitin-conjugating enzyme]-L-cysteine + N(6)-ubiquitinyl-[acceptor protein]-L-lysine.. It functions in the pathway protein modification; protein ubiquitination. In terms of biological role, E3 ubiquitin-protein ligase which mediates 'Lys-48'-linked ubiquitination of STAT2 and induces its proteasomal degradation thereby negatively regulating type-I-interferon signaling. Its function is as follows. Essential sperm cell-surface protein required for sperm-egg fusion and fertilization. The sequence is that of E3 ubiquitin-protein ligase DCST1 (Dcst1) from Mus musculus (Mouse).